A 527-amino-acid polypeptide reads, in one-letter code: Abrin-b (527 aa).

Glutamine 1 bears the Pyrrolidone carboxylic acid mark. N-linked (GlcNAc...) asparagine glycosylation occurs at asparagine 110. Glutamate 163 is an active-site residue. 3 disulfide bridges follow: cysteine 246–cysteine 268, cysteine 285–cysteine 304, and cysteine 328–cysteine 345. In terms of domain architecture, Ricin B-type lectin 1 spans tyrosine 272–glycine 399. The stretch at asparagine 282–serine 324 is one 1-alpha repeat. The stretch at asparagine 325–asparagine 365 is one 1-beta repeat. N-linked (GlcNAc...) asparagine glycosylation is found at asparagine 360 and asparagine 400. A 1-gamma repeat occupies serine 368–asparagine 400. A Ricin B-type lectin 2 domain is found at threonine 402–leucine 526. The 2-alpha repeat unit spans residues serine 413–serine 448. Disulfide bonds link cysteine 416/cysteine 429 and cysteine 455/cysteine 472. The 2-beta repeat unit spans residues threonine 452–asparagine 491. One copy of the 2-gamma repeat lies at aspartate 494–phenylalanine 527.

It in the N-terminal section; belongs to the ribosome-inactivating protein family. Type 2 RIP subfamily. In terms of assembly, disulfide-linked dimer of A and B chains.

It carries out the reaction Endohydrolysis of the N-glycosidic bond at one specific adenosine on the 28S rRNA.. Its function is as follows. The A chain is responsible for inhibiting protein synthesis through the catalytic inactivation of 60S ribosomal subunits by removing adenine from position 4,324 of 28S rRNA. Abrin-a is more toxic than ricin. Functionally, the B chain is a galactose-specific lectin that facilitates the binding of abrin to the cell membrane that precedes endocytosis. This chain is Abrin-b, found in Abrus precatorius (Indian licorice).